Here is a 202-residue protein sequence, read N- to C-terminus: Imidazoleglycerol-phosphate dehydratase (202 aa).

This sequence belongs to the imidazoleglycerol-phosphate dehydratase family.

The protein localises to the cytoplasm. It carries out the reaction D-erythro-1-(imidazol-4-yl)glycerol 3-phosphate = 3-(imidazol-4-yl)-2-oxopropyl phosphate + H2O. Its pathway is amino-acid biosynthesis; L-histidine biosynthesis; L-histidine from 5-phospho-alpha-D-ribose 1-diphosphate: step 6/9. The polypeptide is Imidazoleglycerol-phosphate dehydratase (Synechococcus sp. (strain CC9605)).